The chain runs to 82 residues: Small ribosomal subunit protein uS17 (82 aa).

Belongs to the universal ribosomal protein uS17 family. In terms of assembly, part of the 30S ribosomal subunit.

One of the primary rRNA binding proteins, it binds specifically to the 5'-end of 16S ribosomal RNA. In Xanthobacter autotrophicus (strain ATCC BAA-1158 / Py2), this protein is Small ribosomal subunit protein uS17.